A 423-amino-acid chain; its full sequence is MTDTGWIDLALVSARPQAMGALLRYFRNLDLAEEAFQEACIRALKNWPRTGPPRDPAAWLIFVGRNSGIDKVRRQSRETALPPEELLSDLDDRESELADRLDGAHYRDDILRLLFVCSNPALPATQQIALALRIVSGLSVRQIARAFLVSEAAMEQRITRAKARVAAAGIPFETPDAVDRAERLAAVATMIYLVFNEGYSAMNGPEGVSADLCDEAIRLSRLLLRLFPAEPEMMGLTALLLLQHSRARARFDANGAVVLLEDQDRRLWSRPMITEALAMIDKAMRHRRPGPYQIQAAIAALHARAERPEQTDWEEIDLLYQALERLQPSPVVTLNRAVAVSKREGPEAALAMVEPLGERLSGYFYYHGLRGGLLKQLGRACEARTAFDRAIALATNASEAAYIRMQLDHLAAEPATVAEEEKR.

This is an uncharacterized protein from Rhizobium meliloti (strain 1021) (Ensifer meliloti).